Consider the following 185-residue polypeptide: Mu-like prophage FluMu protein gp16 (185 aa).

This sequence to phage Mu protein gp16.

The protein is Mu-like prophage FluMu protein gp16 of Haemophilus influenzae (strain ATCC 51907 / DSM 11121 / KW20 / Rd).